We begin with the raw amino-acid sequence, 349 residues long: Protein RecA (349 aa).

65–72 (GPESSGKT) is a binding site for ATP.

Belongs to the RecA family.

Its subcellular location is the cytoplasm. Functionally, can catalyze the hydrolysis of ATP in the presence of single-stranded DNA, the ATP-dependent uptake of single-stranded DNA by duplex DNA, and the ATP-dependent hybridization of homologous single-stranded DNAs. It interacts with LexA causing its activation and leading to its autocatalytic cleavage. The protein is Protein RecA of Azotobacter vinelandii (strain DJ / ATCC BAA-1303).